Here is a 270-residue protein sequence, read N- to C-terminus: tRNA pseudouridine synthase A (270 aa).

Aspartate 55 acts as the Nucleophile in catalysis. Substrate is bound at residue tyrosine 110.

The protein belongs to the tRNA pseudouridine synthase TruA family.

The enzyme catalyses uridine(38/39/40) in tRNA = pseudouridine(38/39/40) in tRNA. Functionally, formation of pseudouridine at positions 38, 39 and 40 in the anticodon stem and loop of transfer RNAs. In Methanoculleus marisnigri (strain ATCC 35101 / DSM 1498 / JR1), this protein is tRNA pseudouridine synthase A.